The chain runs to 351 residues: Methionine import ATP-binding protein MetN (351 aa).

Positions 4–249 constitute an ABC transporter domain; the sequence is VQLDHVSVTF…PKAELTQKFV (246 aa). Position 41–48 (41–48) interacts with ATP; it reads GFSGAGKS.

This sequence belongs to the ABC transporter superfamily. Methionine importer (TC 3.A.1.24) family. As to quaternary structure, the complex is composed of two ATP-binding proteins (MetN), two transmembrane proteins (MetI) and a solute-binding protein (MetQ).

The protein localises to the cell membrane. It catalyses the reaction L-methionine(out) + ATP + H2O = L-methionine(in) + ADP + phosphate + H(+). It carries out the reaction D-methionine(out) + ATP + H2O = D-methionine(in) + ADP + phosphate + H(+). Functionally, part of the ABC transporter complex MetNIQ involved in methionine import. Responsible for energy coupling to the transport system. This chain is Methionine import ATP-binding protein MetN, found in Lactobacillus delbrueckii subsp. bulgaricus (strain ATCC BAA-365 / Lb-18).